Reading from the N-terminus, the 341-residue chain is Anthranilate phosphoribosyltransferase (341 aa).

5-phospho-alpha-D-ribose 1-diphosphate is bound by residues glycine 82, 85 to 86 (GD), threonine 90, 92 to 95 (NIST), 110 to 118 (KHGGRSVSS), and serine 122. Glycine 82 serves as a coordination point for anthranilate. Serine 94 is a Mg(2+) binding site. An anthranilate-binding site is contributed by arginine 168. Mg(2+)-binding residues include aspartate 227 and glutamate 228.

This sequence belongs to the anthranilate phosphoribosyltransferase family. Homodimer. Requires Mg(2+) as cofactor.

The enzyme catalyses N-(5-phospho-beta-D-ribosyl)anthranilate + diphosphate = 5-phospho-alpha-D-ribose 1-diphosphate + anthranilate. It participates in amino-acid biosynthesis; L-tryptophan biosynthesis; L-tryptophan from chorismate: step 2/5. Its function is as follows. Catalyzes the transfer of the phosphoribosyl group of 5-phosphorylribose-1-pyrophosphate (PRPP) to anthranilate to yield N-(5'-phosphoribosyl)-anthranilate (PRA). This is Anthranilate phosphoribosyltransferase from Nitrosomonas eutropha (strain DSM 101675 / C91 / Nm57).